Reading from the N-terminus, the 727-residue chain is ATP-dependent zinc metalloprotease FtsH (727 aa).

The Cytoplasmic segment spans residues 1 to 6; sequence MQKAFR. The chain crosses the membrane as a helical span at residues 7-27; sequence NVLVIAIIGVIIFGVFSYING. At 28 to 110 the chain is on the extracellular side; the sequence is NGNTPKQLSY…KVKEEEKQSV (83 aa). The chain crosses the membrane as a helical span at residues 111–131; it reads FVSMLTTLIPVLIIAFLFIFF. Residues 132 to 727 are Cytoplasmic-facing; it reads LSQAQGGGGG…PNDPNNPSNR (596 aa). Residue 205–212 participates in ATP binding; sequence GPPGTGKT. Histidine 427 lines the Zn(2+) pocket. Glutamate 428 is a catalytic residue. The Zn(2+) site is built by histidine 431 and aspartate 503. Basic and acidic residues-rich tracts occupy residues 645 to 684 and 691 to 706; these read LEEGKEDMREDRKEDNDMNRERRHRQRDDRDNQTGHDQLR and NDQHRGHSNNEEDTGH. The disordered stretch occupies residues 645–727; it reads LEEGKEDMRE…PNDPNNPSNR (83 aa). The span at 710 to 727 shows a compositional bias: low complexity; that stretch reads PNIDKPYNPNDPNNPSNR.

This sequence in the central section; belongs to the AAA ATPase family. It in the C-terminal section; belongs to the peptidase M41 family. Homohexamer. Zn(2+) serves as cofactor.

The protein localises to the cell membrane. Functionally, acts as a processive, ATP-dependent zinc metallopeptidase for both cytoplasmic and membrane proteins. Plays a role in the quality control of integral membrane proteins. The sequence is that of ATP-dependent zinc metalloprotease FtsH from Staphylococcus haemolyticus (strain JCSC1435).